Here is a 479-residue protein sequence, read N- to C-terminus: FAD-dependent monooxygenase atmM (479 aa).

The helical transmembrane segment at 10–30 threads the bilayer; that stretch reads IIVGGSVAGLTLAHCLQRAGI. FAD-binding residues include Glu36, Gly50, Arg109, Asp309, and Ala322. Residues 445 to 465 traverse the membrane as a helical segment; it reads WILVLLVIVVSFGLHSPELVI.

This sequence belongs to the paxM FAD-dependent monooxygenase family. The cofactor is FAD.

It is found in the membrane. It participates in secondary metabolite biosynthesis. FAD-dependent monooxygenase; part of the ATM1 gene cluster that mediates the biosynthesis of aflatrem, a tremorgenic mycotoxin with acute neurotoxic effects. Synthesis of geranylgeranyl diphosphate (GGPP) by AtmG (a GGPP synthase) precedes condensation of GGPP with indole 3-glycerol phosphate, followed by epoxidation and cyclization by AtmM (a FAD-dependent monooxygenase) and AtmC (a prenyltransferase) to produce paspaline. AtmB is also essential for paspaline production, but its exact role has not been identified yet. AtmP, a cytochrome P450 monooxygenase, subsequently converts paspaline to 13-desoxypaxilline via PC-M6 by removal of the C-30 methyl group and oxidation at C-10. AtmQ, a cytochrome P450 monooxygenase, then catalyzes the oxidation of 13-desoxypaxilline, first at C-7 to produce paspalicine and then at C-13 to form paspalinine. Finally, AtmD prenylates paspalinine to form aflatrem. The chain is FAD-dependent monooxygenase atmM from Aspergillus flavus.